The sequence spans 155 residues: Cyanate hydratase (155 aa).

Catalysis depends on residues R101, E104, and S127.

This sequence belongs to the cyanase family.

The enzyme catalyses cyanate + hydrogencarbonate + 3 H(+) = NH4(+) + 2 CO2. Functionally, catalyzes the reaction of cyanate with bicarbonate to produce ammonia and carbon dioxide. The sequence is that of Cyanate hydratase from Coccidioides posadasii (strain C735) (Valley fever fungus).